Reading from the N-terminus, the 210-residue chain is Thymidylate kinase (210 aa).

Residue 9 to 16 (GLEGAGKS) coordinates ATP.

This sequence belongs to the thymidylate kinase family.

The enzyme catalyses dTMP + ATP = dTDP + ADP. In terms of biological role, phosphorylation of dTMP to form dTDP in both de novo and salvage pathways of dTTP synthesis. This Aliivibrio fischeri (strain MJ11) (Vibrio fischeri) protein is Thymidylate kinase.